The chain runs to 475 residues: UDP-N-acetylmuramate--L-alanine ligase (475 aa).

114 to 120 (GTHGKTT) lines the ATP pocket.

It belongs to the MurCDEF family.

It is found in the cytoplasm. The catalysed reaction is UDP-N-acetyl-alpha-D-muramate + L-alanine + ATP = UDP-N-acetyl-alpha-D-muramoyl-L-alanine + ADP + phosphate + H(+). It functions in the pathway cell wall biogenesis; peptidoglycan biosynthesis. Functionally, cell wall formation. The polypeptide is UDP-N-acetylmuramate--L-alanine ligase (Bartonella henselae (strain ATCC 49882 / DSM 28221 / CCUG 30454 / Houston 1) (Rochalimaea henselae)).